The primary structure comprises 519 residues: MPFNGEKQCVSEDQPSDSDSSRFSESMASLSDYECSRQSFTSDSSSKSSSPASTSPPRVVTFDEVMAAARNLSNMTLAHEIAVNENFQLKQDALPESSLAGRVRHIVHQAFWDVLESELNAEPPEYEHAIKLFEEIREILLSFLTPGGNRLRNQICEVLDTDLIRQQAEHSAVDIQGLANYVISTMGKLCAPVRDDDIRELKATSNIVEVLRQIFHVLDLMKMDMVNFTIRSLRPHLQRQLVDYERTKFQEILEETPSALNQTTEWIKESVHEELLSLSEATLTPGAENNSKPSLSPTLVLNNSYLKLLQWDYQKKELPETLMTDGARLQELTEKLNQLKMIACLALITNNMVGALTEGLPELAVRLKRISAVLLEGMNKETFNLKEVLNSIGIQICVEVNKTLMERGLPTLNAEVQDNLVGQFSSIEEEDNPIWSLIDKRIQLYMKSLLCLPSPPRCMPPVPGGLAVVQQELESLGLQYANIVNLNKQVYGPFYANILRKLLFGEEATGKAEASSSTN.

A disordered region spans residues 1 to 57 (MPFNGEKQCVSEDQPSDSDSSRFSESMASLSDYECSRQSFTSDSSSKSSSPASTSPP). Ser-16 bears the Phosphoserine mark. Composition is skewed to low complexity over residues 17–29 (DSDS…SMAS) and 36–55 (SRQS…ASTS).

Belongs to the TCP11 family. In terms of assembly, interacts with FMNL2; this interaction promotes muscle-derived satellite cell (MDSC) migration and differentiation.

The protein resides in the cytoplasm. The protein localises to the cytoskeleton. Functionally, promotes the migration of muscle-derived satellite cells (MDSCs) during differentiation throught interaction with FMNL2 and therefore may participate in microfilament assembly. This chain is T-complex protein 11-like protein 2, found in Bos taurus (Bovine).